Consider the following 200-residue polypeptide: MNIIELFGPLQEIIFFILEIGVILGSLGVVLLSNIVYSAFFLGLVFFCISLLYFALNADFVAAAQILIYVGAVNVLIVFAVMLINKPESLKIFPVWTVGDKITLAICLTSFFLLVNIILNTSWSNITVITESKGFLESNFTQNVQRIGSLLLTQYLLPFELLSIVLLVALIGAIVIARRENLIETNKKKVLQIKKSPTTF.

Transmembrane regions (helical) follow at residues 13–33 (IIFF…VLLS), 35–55 (IVYS…LYFA), 64–84 (AQIL…VMLI), 102–122 (ITLA…LNTS), and 156–176 (LLPF…AIVI).

Belongs to the complex I subunit 6 family. As to quaternary structure, NDH is composed of at least 16 different subunits, 5 of which are encoded in the nucleus.

The protein localises to the plastid. The protein resides in the chloroplast thylakoid membrane. The catalysed reaction is a plastoquinone + NADH + (n+1) H(+)(in) = a plastoquinol + NAD(+) + n H(+)(out). It catalyses the reaction a plastoquinone + NADPH + (n+1) H(+)(in) = a plastoquinol + NADP(+) + n H(+)(out). Its function is as follows. NDH shuttles electrons from NAD(P)H:plastoquinone, via FMN and iron-sulfur (Fe-S) centers, to quinones in the photosynthetic chain and possibly in a chloroplast respiratory chain. The immediate electron acceptor for the enzyme in this species is believed to be plastoquinone. Couples the redox reaction to proton translocation, and thus conserves the redox energy in a proton gradient. This chain is NAD(P)H-quinone oxidoreductase subunit 6, chloroplastic (ndhG), found in Physcomitrium patens (Spreading-leaved earth moss).